The sequence spans 1148 residues: Signal transducer and activator of transcription B (1148 aa).

Positions 1–36 (MEVTNNGSNNSSTIASTNPPTSPSTTSTSKSLPPLS) are enriched in low complexity. 5 disordered regions span residues 1–81 (MEVT…NNNN), 93–178 (SSSN…LSSS), 268–312 (NTNN…PSNG), 403–425 (KNNI…NSLL), and 453–645 (YDYN…KTVT). The segment covering 37–47 (FLNSQWENKQS) has biased composition (polar residues). Low complexity-rich tracts occupy residues 48–81 (NNNN…NNNN), 106–178 (NNNN…LSSS), and 268–298 (NTNN…NNNN). The span at 466–517 (SNSSNNNSSNNNSNNNNNNNSNNNNNIIGSISPPHSSQLQQVSSPQQQQQQQ) shows a compositional bias: low complexity. Over residues 525–541 (SISSGSIKDLINSPNKE) the composition is skewed to polar residues. Residues 544 to 557 (SKSQYPSSLSQSSS) are compositionally biased toward low complexity. Over residues 561–572 (MDTDVDSTDEFD) the composition is skewed to acidic residues. The span at 574–610 (GSNSNNNNNNNNNNNNNNNSNNSNNKKRNNSNNNNLG) shows a compositional bias: low complexity. Positions 997–1122 (WQNGFIFMFL…TIPVFKREPK (126 aa)) constitute an SH2 domain.

It belongs to the transcription factor STAT family. As to quaternary structure, homodimer. Does not form heterodimers with other family members.

It is found in the nucleus. In terms of biological role, transcription factor that regulates gene expression during development. Required for optimal cell growth. In Dictyostelium discoideum (Social amoeba), this protein is Signal transducer and activator of transcription B (dstB).